A 262-amino-acid chain; its full sequence is Small ribosomal subunit protein eS1 (262 aa).

This sequence belongs to the eukaryotic ribosomal protein eS1 family. As to quaternary structure, component of the small ribosomal subunit. Mature ribosomes consist of a small (40S) and a large (60S) subunit. The 40S subunit contains about 33 different proteins and 1 molecule of RNA (18S). The 60S subunit contains about 49 different proteins and 3 molecules of RNA (25S, 5.8S and 5S).

The protein resides in the cytoplasm. The polypeptide is Small ribosomal subunit protein eS1 (Cryptosporidium hominis).